A 526-amino-acid polypeptide reads, in one-letter code: Probable polyol transporter 4 (526 aa).

2 disordered regions span residues 1–21 (MMKN…AVSV) and 28–47 (YQRM…AEAR). The span at 29 to 47 (QRMDSDAEESQNHREAEAR) shows a compositional bias: basic and acidic residues. 12 helical membrane passes run 63-83 (SLNN…VLFI), 92-112 (VQTE…SLAG), 125-145 (MALA…APSF), 153-173 (TLAG…IAEI), 180-200 (GFFT…GYVS), 215-235 (IMLA…CVIP), 300-320 (MLIV…DATV), 340-360 (AATV…TFLI), 371-391 (VSTI…TFLG), 395-415 (LGIT…SIGM), 437-457 (ALGA…FLSV), and 465-485 (GTFF…YVLV).

It belongs to the major facilitator superfamily. Sugar transporter (TC 2.A.1.1) family.

Its subcellular location is the membrane. In terms of biological role, plasma membrane sugar-proton symporter. This chain is Probable polyol transporter 4 (PLT4), found in Arabidopsis thaliana (Mouse-ear cress).